Here is a 190-residue protein sequence, read N- to C-terminus: dCTP deaminase, dUMP-forming (190 aa).

Residues 101 to 106 (KSSLGR), Asp119, 127 to 129 (TLE), Gln148, Tyr162, and Gln174 each bind dCTP. Glu129 serves as the catalytic Proton donor/acceptor. The interval 161-190 (PYGSSGVGSKYQGQRGPTPSRSYQNFIRST) is disordered. Residues 171–190 (YQGQRGPTPSRSYQNFIRST) show a composition bias toward polar residues.

Belongs to the dCTP deaminase family. In terms of assembly, homotrimer.

It catalyses the reaction dCTP + 2 H2O = dUMP + NH4(+) + diphosphate. It functions in the pathway pyrimidine metabolism; dUMP biosynthesis; dUMP from dCTP: step 1/1. In terms of biological role, bifunctional enzyme that catalyzes both the deamination of dCTP to dUTP and the hydrolysis of dUTP to dUMP without releasing the toxic dUTP intermediate. This chain is dCTP deaminase, dUMP-forming, found in Mycobacterium marinum (strain ATCC BAA-535 / M).